The following is a 151-amino-acid chain: Dehydrin Rab16D (151 aa).

Residues Met-1–Gly-138 are disordered. A compositionally biased stretch (basic and acidic residues) spans Glu-39 to Leu-51. Composition is skewed to low complexity over residues Gly-90–Gly-105 and Ile-117–Ala-132.

It belongs to the plant dehydrin family.

This Oryza sativa subsp. indica (Rice) protein is Dehydrin Rab16D (RAB16D).